We begin with the raw amino-acid sequence, 726 residues long: Replication restart protein PriA (726 aa).

Isoleucine 234 is a binding site for ATP. The 140-residue stretch at 234–373 (IQSVLYKGVQ…LHRKCFYIKL (140 aa)) folds into the Helicase ATP-binding domain. The short motif at 316-319 (LEEH) is the DEAH box element. Residues cysteine 431, cysteine 434, cysteine 440, cysteine 443, cysteine 458, cysteine 461, cysteine 471, and cysteine 474 each contribute to the Zn(2+) site.

It belongs to the helicase family. PriA subfamily. As to quaternary structure, component of the replication restart primosome. It depends on Zn(2+) as a cofactor.

It catalyses the reaction Couples ATP hydrolysis with the unwinding of duplex DNA by translocating in the 3'-5' direction.. The enzyme catalyses ATP + H2O = ADP + phosphate + H(+). Functionally, initiates the restart of stalled replication forks, which reloads the replicative helicase on sites other than the origin of replication. Recognizes and binds to abandoned replication forks and remodels them to uncover a helicase loading site. Promotes assembly of the primosome at these replication forks. This Buchnera aphidicola subsp. Acyrthosiphon pisum (strain APS) (Acyrthosiphon pisum symbiotic bacterium) protein is Replication restart protein PriA.